The chain runs to 534 residues: Nuclear polyadenylated RNA-binding protein 4 (534 aa).

A disordered region spans residues 1 to 154; sequence MSSDEEDFND…TKEERSKADL (154 aa). Residues Ser2 and Ser3 each carry the phosphoserine modification. The span at 13–30 shows a compositional bias: basic and acidic residues; that stretch reads GDDKPTTTEEVKKEEEQN. Low complexity predominate over residues 37–78; that stretch reads SQLDQLAALQALSSSLNKLNNPNSNNSSSNNSNQDTSSSKQD. 2 positions are modified to phosphoserine: Ser51 and Ser87. The segment covering 81-98 has biased composition (basic and acidic residues); the sequence is ANDKEGSNEDTKNEKKQE. Composition is skewed to low complexity over residues 99 to 112 and 121 to 144; these read SATS…ASSA and QLQQ…QVTQ. A compositionally biased stretch (basic and acidic residues) spans 145 to 154; that stretch reads TKEERSKADL. RRM domains are found at residues 159–241 and 243–320; these read CKMF…EQDK and GKIF…RAEP. Phosphoserine is present on Ser206. 2 disordered regions span residues 316–354 and 415–534; these read KRAE…DFNQ and MPPN…PYNR. Over residues 336 to 354 the composition is skewed to low complexity; the sequence is GNNMNRRGGNFGNQGDFNQ. Residues 420–459 are compositionally biased toward polar residues; sequence MTLNQPQQDSNATQGSPAPSDSDNNKSNDVQTIGNTSNTD. Residue Thr458 is modified to Phosphothreonine. Ser460 and Ser462 each carry phosphoserine. Over residues 460 to 475 the composition is skewed to low complexity; sequence SGSPPLNLPNGPKGPS. The span at 478–505 shows a compositional bias: basic and acidic residues; the sequence is NDDHNSGYGYNRDRGDRDRNDRDRDYNH. Arg519 bears the Omega-N-methylarginine mark. Over residues 523–534 the composition is skewed to low complexity; the sequence is NRRNNGYHPYNR.

Interacts with NAM7. Post-translationally, methylated by HMT1. The methylation is required for nuclear export.

The protein localises to the cytoplasm. The protein resides in the nucleus. It is found in the stress granule. In terms of biological role, RNA-binding protein, which is involved in the polyadenylation-dependent pre-mRNA 3'-end formation and cooperates with the cleavage factor CFIA complex and the cleavage and polyadenylation factor (CPF) complex. May be involved in regulation of poly(A) site selection. Is involved in nonsense-mediated mRNA decay. Seems to bind to an RNA downstream sequence element (DSE) located 3' of a nonsense codon and may mark the transcript for decay. This Saccharomyces cerevisiae (strain ATCC 204508 / S288c) (Baker's yeast) protein is Nuclear polyadenylated RNA-binding protein 4.